The primary structure comprises 59 residues: Large ribosomal subunit protein bL35 (59 aa).

Disordered stretches follow at residues 1–22 and 30–49; these read MKVKSAAKKRFKLTKSGQIKRK and APHKTTKQKRHLRKQGTVSA. Basic residues predominate over residues 30-43; it reads APHKTTKQKRHLRK.

Belongs to the bacterial ribosomal protein bL35 family.

This chain is Large ribosomal subunit protein bL35 (rpmI), found in Mycoplasma pneumoniae (strain ATCC 29342 / M129 / Subtype 1) (Mycoplasmoides pneumoniae).